Here is a 151-residue protein sequence, read N- to C-terminus: Meiotically up-regulated gene 114 protein (151 aa).

It localises to the cytoplasm. Has a role in meiosis. In Schizosaccharomyces pombe (strain 972 / ATCC 24843) (Fission yeast), this protein is Meiotically up-regulated gene 114 protein (mug114).